The primary structure comprises 942 residues: UvrABC system protein A (942 aa).

32–39 (GLSGSGKS) serves as a coordination point for ATP. A C4-type zinc finger spans residues 251-278 (CPVCGFTVPELEPRLFSFNAPFGSCPTC). 2 ABC transporter domains span residues 308-589 (WNPI…KKSI) and 609-937 (GNGR…HYLK). Residue 641 to 648 (GVSGSGKS) coordinates ATP. The C4-type zinc-finger motif lies at 740–766 (CEACSGDGIIKIEMHFLPDVYVPCEVC).

The protein belongs to the ABC transporter superfamily. UvrA family. In terms of assembly, forms a heterotetramer with UvrB during the search for lesions.

It is found in the cytoplasm. The UvrABC repair system catalyzes the recognition and processing of DNA lesions. UvrA is an ATPase and a DNA-binding protein. A damage recognition complex composed of 2 UvrA and 2 UvrB subunits scans DNA for abnormalities. When the presence of a lesion has been verified by UvrB, the UvrA molecules dissociate. The chain is UvrABC system protein A from Streptococcus pyogenes serotype M1.